A 204-amino-acid polypeptide reads, in one-letter code: Peptide chain release factor homolog (204 aa).

The segment at 2–98 (ILLQLSSAQG…KNWFLGIGRF (97 aa)) is rRNA-recognition domain, N-terminus. The tract at residues 99–107 (TADEQEQSD) is linker 1. A GGQ domain region spans residues 108 to 161 (AIRYETLRSSGPGGQHVNKTDSAVRATHLASGISVKVQSERSQHANKRLARLLI). Residues 120-122 (GGQ) carry the GGQ motif motif. Positions 162–179 (AWKLEQQQQENSAALKSQ) are linker 2. The interval 180 to 204 (RRMFHHQIERGNPRRTFTGMAFIEG) is rRNA-recognition domain, C-terminus.

This sequence belongs to the prokaryotic/mitochondrial release factor family. In terms of assembly, found in the A site of damaged 70S ribosomes, but not in undamaged ribosomes. Contacts (damaged) 16S rRNA, 23S rRNA and ribosomal protein uS12, but not mRNA.

In terms of biological role, peptide chain release-like factor that acts on 70S ribosomes with specific damage to their decoding center (cleavage of 16S rRNA between adenine-1493 and guanosine-1494, E.coli 16S rRNA numbering). Probably acts as a peptidyl-tRNA hydrolase, allowing release of the nascent chain and dissociation of the 30S and 50S subunits. Can release mRNA as short as 19 nucleotides (nt, mRNA-19, which has a single amino acid in the P-site and only a single nt in the A-site) from the ribosome. This specific cleavage is inflicted by CdiA (ECL_04451) or by colicin E3-type (ColE3) proteins. In vivo the PrfH-RtcB2 pair restores growth in the presence of ribotoxins that specifically create this damage. This chain is Peptide chain release factor homolog, found in Escherichia coli (strain ATCC 25922 / DSM 1103 / LMG 8223 / NCIMB 12210 / NCTC 12241 / WDCM 00013 / Seattle 1946).